The primary structure comprises 484 residues: UBX domain-containing protein 11 (484 aa).

The tract at residues 1–28 (MSSPLASLSKTRKVPLESESVNPGRRGI) is disordered. Residues 69–147 (HDSELMASMT…IGEMERFLSD (79 aa)) adopt a coiled-coil conformation. Residues 227-291 (LEPIPLKVYR…VSDLRNQIYP (65 aa)) enclose the SEP domain. The UBX domain maps to 389 to 466 (PMPLLSMLRI…GLVPNATLLL (78 aa)). Ser478 and Ser482 each carry phosphoserine.

As to quaternary structure, interacts with GNA12, GNA13, RND1, RND2 and RND3.

Its subcellular location is the cytoplasm. It is found in the cytoskeleton. In terms of biological role, may be involved in the reorganization of actin cytoskeleton mediated by RND1, RND2 and RND3. Promotes RHOA activation mediated by GNA12 and GNA13. The protein is UBX domain-containing protein 11 (Ubxn11) of Mus musculus (Mouse).